We begin with the raw amino-acid sequence, 173 residues long: Small ribosomal subunit protein uS5 (173 aa).

One can recognise an S5 DRBM domain in the interval 18–81 (LREKMIAVNR…EQARRGMFKV (64 aa)).

Belongs to the universal ribosomal protein uS5 family. Part of the 30S ribosomal subunit. Contacts proteins S4 and S8.

With S4 and S12 plays an important role in translational accuracy. In terms of biological role, located at the back of the 30S subunit body where it stabilizes the conformation of the head with respect to the body. The chain is Small ribosomal subunit protein uS5 from Bordetella avium (strain 197N).